The sequence spans 141 residues: Hemoglobin subunit alpha-A (141 aa).

A Globin domain is found at 1–141 (VLSAADKANV…VGAVLTAKYR (141 aa)). Residue H58 coordinates O2. Heme b is bound at residue H87.

Belongs to the globin family. As to quaternary structure, heterotetramer of two alpha chains and two beta chains. In terms of tissue distribution, red blood cells.

Functionally, involved in oxygen transport from the lung to the various peripheral tissues. This is Hemoglobin subunit alpha-A (HBAA) from Chloephaga melanoptera (Andean goose).